The chain runs to 153 residues: Endoribonuclease YbeY (153 aa).

Residues His114, His118, and His124 each coordinate Zn(2+).

It belongs to the endoribonuclease YbeY family. Requires Zn(2+) as cofactor.

It localises to the cytoplasm. Functionally, single strand-specific metallo-endoribonuclease involved in late-stage 70S ribosome quality control and in maturation of the 3' terminus of the 16S rRNA. This is Endoribonuclease YbeY from Finegoldia magna (strain ATCC 29328 / DSM 20472 / WAL 2508) (Peptostreptococcus magnus).